Here is a 441-residue protein sequence, read N- to C-terminus: Ribulose bisphosphate carboxylase/oxygenase activase, chloroplastic (441 aa).

An ATP-binding site is contributed by 167–174 (VWGGKGQG).

This sequence belongs to the RuBisCO activase family.

The protein localises to the plastid. It is found in the chloroplast stroma. In terms of biological role, activation of RuBisCO (ribulose-1,5-bisphosphate carboxylase/oxygenase; EC 4.1.1.39) involves the ATP-dependent carboxylation of the epsilon-amino group of lysine leading to a carbamate structure. This Phaseolus vulgaris (Kidney bean) protein is Ribulose bisphosphate carboxylase/oxygenase activase, chloroplastic (RCA1).